The sequence spans 382 residues: uncharacterized protein (382 aa).

A run of 12 helical transmembrane segments spans residues 8 to 28 (VLLL…LNTL), 41 to 61 (WQVG…TLIA), 73 to 93 (SYHY…LSVD), 94 to 114 (FWSW…IWVI), 133 to 153 (AAYM…LGVV), 157 to 177 (LLSV…PLLF), 208 to 228 (GCII…LYLS), 235 to 255 (ASVG…QWPI), 274 to 294 (VVIL…ALFI), 295 to 315 (LGCA…EKVS), 325 to 345 (ALLM…SLLM), and 349 to 369 (SDNL…MMLL).

Belongs to the major facilitator superfamily. YcaD (TC 2.A.1.26) family.

It is found in the cell inner membrane. This is an uncharacterized protein from Yersinia enterocolitica serotype O:8 / biotype 1B (strain NCTC 13174 / 8081).